A 283-amino-acid polypeptide reads, in one-letter code: Pantoate--beta-alanine ligase (283 aa).

The protein belongs to the pantothenate synthetase family.

The catalysed reaction is (R)-pantoate + beta-alanine + ATP = (R)-pantothenate + AMP + diphosphate + H(+). The protein operates within cofactor biosynthesis; (R)-pantothenate biosynthesis; (R)-pantothenate from (R)-pantoate and beta-alanine: step 1/1. In Schizosaccharomyces pombe (strain 972 / ATCC 24843) (Fission yeast), this protein is Pantoate--beta-alanine ligase (pan6).